Reading from the N-terminus, the 163-residue chain is SsrA-binding protein (163 aa).

The protein belongs to the SmpB family.

The protein localises to the cytoplasm. Its function is as follows. Required for rescue of stalled ribosomes mediated by trans-translation. Binds to transfer-messenger RNA (tmRNA), required for stable association of tmRNA with ribosomes. tmRNA and SmpB together mimic tRNA shape, replacing the anticodon stem-loop with SmpB. tmRNA is encoded by the ssrA gene; the 2 termini fold to resemble tRNA(Ala) and it encodes a 'tag peptide', a short internal open reading frame. During trans-translation Ala-aminoacylated tmRNA acts like a tRNA, entering the A-site of stalled ribosomes, displacing the stalled mRNA. The ribosome then switches to translate the ORF on the tmRNA; the nascent peptide is terminated with the 'tag peptide' encoded by the tmRNA and targeted for degradation. The ribosome is freed to recommence translation, which seems to be the essential function of trans-translation. This chain is SsrA-binding protein, found in Shewanella putrefaciens (strain CN-32 / ATCC BAA-453).